A 932-amino-acid polypeptide reads, in one-letter code: LPS-assembly protein LptD (932 aa).

Residues 1 to 33 (MALKSPAFRRKFPLLVTGGLLALQPLATSYAVA) form the signal peptide. Residues 54–87 (PVNNLPPRPVHEGAAVSSGTEAASEGETADRPML) form a disordered region.

This sequence belongs to the LptD family. Component of the lipopolysaccharide transport and assembly complex. Interacts with LptE and LptA.

The protein resides in the cell outer membrane. Functionally, together with LptE, is involved in the assembly of lipopolysaccharide (LPS) at the surface of the outer membrane. The sequence is that of LPS-assembly protein LptD from Pseudomonas putida (strain GB-1).